Consider the following 192-residue polypeptide: GTP-dependent dephospho-CoA kinase (192 aa).

GTP is bound by residues D49, V50, V51, D68, K70, and E127.

Belongs to the GTP-dependent DPCK family.

It catalyses the reaction 3'-dephospho-CoA + GTP = GDP + CoA + H(+). Its pathway is cofactor biosynthesis; coenzyme A biosynthesis. Catalyzes the GTP-dependent phosphorylation of the 3'-hydroxyl group of dephosphocoenzyme A to form coenzyme A (CoA). This chain is GTP-dependent dephospho-CoA kinase, found in Halorubrum lacusprofundi (strain ATCC 49239 / DSM 5036 / JCM 8891 / ACAM 34).